A 125-amino-acid polypeptide reads, in one-letter code: Profilin-A (125 aa).

Ser2 carries the N-acetylserine modification.

Belongs to the profilin family. Occurs in many kinds of cells as a complex with monomeric actin in a 1:1 ratio.

The protein resides in the cytoplasm. The protein localises to the cytoskeleton. Its function is as follows. Binds to actin and affects the structure of the cytoskeleton. At high concentrations, profilin prevents the polymerization of actin, whereas it enhances it at low concentrations. By binding to PIP2, it inhibits the formation of IP3 and DG. The protein is Profilin-A (PROA) of Physarum polycephalum (Slime mold).